The following is an 847-amino-acid chain: MSSGEPLSETSSSSSSFVPVDQVHLQDAIQVIDENKHFNKDILGYINKTCPPNIGHNYHIVAVFGSQSTGKSTLLNRLFNTNFDVMNEQSRQQTTKGIWLAQSPVLSTSHGHGASKSSILVMDVEGTDGRERGEDQDFERKAALFALSTSEVLILNIWETQVGLYQGANMGLLKTVFEVNLTLFGKSKLESKNNLQSKSSHKVLLLVVIRDHVGNTPVENLASTITIDLKKMWDSLLKPTELKELAFEDFFDLDFHALNHKILQPKEFTAGVGRLGDRLVVENDIFKPEYHHNIPIDGWTLYAEKCWEQIETNKDLDLPTQQILVAQFKCDEVVDTVFKEFSNKFKELFAVIEESPDYENVGALFSDLKSEVLEDYDQVAAKYNQSVYLQKRQKLDDLVNTKLKEVFDVHAKNLLQHSLTKYKKDLVALKGKDFAARSKSLSDEALELVMLNLSHISLSGAFATEILLHQFASDIKAITSQQQFIELNNIVSKAVKKLSQSLSKLMQLQLNDPTEKTWDNILYNFHQLQKEFTSKHNGDFGLNTTEAENENAFAKFKFQSWDAFYQLIHKLITKEKVLQQLQTRFDDKFRYDVNGLPKLYQNSRELEESFAVAKEHALGVLPILTIAKLSDDSEIIPDVDIFTKLLRVKYSASNRVGNYNEEGGEEEEDEDEDEDDDVALNGFADIIDEVEKAEIMAKFRKEIDAKFMETKRSIVQHVTQIPYYIYIIILLLGWNEFMAVVRNPFTFSLAIILGASLYILYTMNLLKPALTVTQRLVDEVIAVGKEKLREVLIDDHHIQAHNLDKMTGKVKVGIHEENAKEDEDATDFLKPKPTQVDVTSLNVVEEE.

Residues 1 to 720 are Cytoplasmic-facing; it reads MSSGEPLSET…KRSIVQHVTQ (720 aa). The GB1/RHD3-type G domain maps to 55 to 290; it reads GHNYHIVAVF…VENDIFKPEY (236 aa). Residue 65 to 72 participates in GTP binding; sequence GSQSTGKS. Residues 721 to 741 form a helical membrane-spanning segment; it reads IPYYIYIIILLLGWNEFMAVV. The Lumenal portion of the chain corresponds to 742-744; it reads RNP. A helical membrane pass occupies residues 745 to 765; the sequence is FTFSLAIILGASLYILYTMNL. Over 766–847 the chain is Cytoplasmic; that stretch reads LKPALTVTQR…VTSLNVVEEE (82 aa).

Belongs to the TRAFAC class dynamin-like GTPase superfamily. GB1/RHD3 GTPase family. RHD3 subfamily.

The protein resides in the endoplasmic reticulum membrane. In terms of biological role, cooperates with the reticulon proteins and tubule-shaping DP1 family proteins to generate and maintain the structure of the tubular endoplasmic reticulum network. Has GTPase activity, which is required for its function in ER organization. In Lodderomyces elongisporus (strain ATCC 11503 / CBS 2605 / JCM 1781 / NBRC 1676 / NRRL YB-4239) (Yeast), this protein is Protein SEY1.